Reading from the N-terminus, the 100-residue chain is MDFTVKPRRSLIVYMHSMKQVRQLKRFGLIQYQSRKEHYVVLYMDESQIPAATTKIKKLNFVRRVEPSYRPDVAMNFGERVDQGFFKPTTTGAPDDDDED.

It belongs to the UPF0298 family.

It is found in the cytoplasm. The protein is UPF0298 protein lp_2135 of Lactiplantibacillus plantarum (strain ATCC BAA-793 / NCIMB 8826 / WCFS1) (Lactobacillus plantarum).